A 309-amino-acid chain; its full sequence is Porphobilinogen deaminase (309 aa).

Cys-240 is modified (S-(dipyrrolylmethanemethyl)cysteine).

This sequence belongs to the HMBS family. In terms of assembly, monomer. It depends on dipyrromethane as a cofactor.

It carries out the reaction 4 porphobilinogen + H2O = hydroxymethylbilane + 4 NH4(+). It functions in the pathway porphyrin-containing compound metabolism; protoporphyrin-IX biosynthesis; coproporphyrinogen-III from 5-aminolevulinate: step 2/4. In terms of biological role, tetrapolymerization of the monopyrrole PBG into the hydroxymethylbilane pre-uroporphyrinogen in several discrete steps. This is Porphobilinogen deaminase from Lawsonia intracellularis (strain PHE/MN1-00).